Reading from the N-terminus, the 104-residue chain is Small ribosomal subunit protein uS10 (104 aa).

The protein belongs to the universal ribosomal protein uS10 family. Part of the 30S ribosomal subunit.

Functionally, involved in the binding of tRNA to the ribosomes. The protein is Small ribosomal subunit protein uS10 of Thermosynechococcus vestitus (strain NIES-2133 / IAM M-273 / BP-1).